A 166-amino-acid chain; its full sequence is Prorelaxin H2 (166 aa).

An N-terminal signal peptide occupies residues 1–5 (SRAVA). 3 cysteine pairs are disulfide-bonded: Cys-16–Cys-153, Cys-28–Cys-166, and Cys-152–Cys-157. A propeptide spans 37–138 (SLSQEDAPQT…LKYLGLDTHS (102 aa)) (connecting peptide).

This sequence belongs to the insulin family. As to quaternary structure, heterodimer of a B chain and an A chain linked by two disulfide bonds. In terms of tissue distribution, expressed in the corpus luteum of pregnancy and in the placenta.

It is found in the secreted. Relaxin is an ovarian hormone that acts with estrogen to produce dilatation of the birth canal in many mammals. May be involved in remodeling of connective tissues during pregnancy, promoting growth of pubic ligaments and ripening of the cervix. This is Prorelaxin H2 (RNL2) from Pan troglodytes (Chimpanzee).